The following is a 244-amino-acid chain: 5'-nucleotidase SurE (244 aa).

Residues aspartate 8, aspartate 9, serine 39, and asparagine 96 each coordinate a divalent metal cation.

The protein belongs to the SurE nucleotidase family. A divalent metal cation is required as a cofactor.

It localises to the cytoplasm. The enzyme catalyses a ribonucleoside 5'-phosphate + H2O = a ribonucleoside + phosphate. In terms of biological role, nucleotidase that shows phosphatase activity on nucleoside 5'-monophosphates. This is 5'-nucleotidase SurE from Thermus thermophilus (strain ATCC 27634 / DSM 579 / HB8).